A 266-amino-acid chain; its full sequence is Killer cell lectin-like receptor 5 (266 aa).

Over 1–44 the chain is Cytoplasmic; sequence MSEPEVTYSTVRLHKSSGLQRLVSHEEIQGPGEAGYRKCSVPWQ. Residues 45-66 form a helical; Signal-anchor for type II membrane protein membrane-spanning segment; that stretch reads LTVRSLGIFCFLLLVTVAVLAV. At 67–266 the chain is on the extracellular side; that stretch reads KIFQYSQHKQ…CGKKLDHFPG (200 aa). Asn87 and Asn104 each carry an N-linked (GlcNAc...) asparagine glycan. The C-type lectin domain maps to 143 to 261; sequence GVKHWFCYGT…SYFCICGKKL (119 aa). Intrachain disulfides connect Cys149-Cys154, Cys167-Cys255, Cys171-Cys257, and Cys236-Cys249. A glycan (N-linked (GlcNAc...) asparagine) is linked at Asn250.

Homodimer; disulfide-linked. In terms of tissue distribution, mostly expressed in NK cells, but also observed on NK T and memory T-cells.

The protein resides in the membrane. Receptor on natural killer (NK) cells for class I MHC. This is Killer cell lectin-like receptor 5 (Klra5) from Mus musculus (Mouse).